A 350-amino-acid polypeptide reads, in one-letter code: Twinfilin-1 (350 aa).

An N-acetylserine modification is found at S2. Positions 2 to 139 constitute an ADF-H 1 domain; sequence SHQTGIQASE…SLHGYKKYLL (138 aa). A phosphoserine mark is found at S143 and S277. Positions 175 to 313 constitute an ADF-H 2 domain; the sequence is LQGVAFPISR…TADFLYDEVH (139 aa). Phosphotyrosine is present on Y309. Residues 317–350 form a disordered region; sequence HAHKQSFAKPKGPAGKRGIRRLIRGPAEAEATTD. A Phosphothreonine modification is found at T349.

This sequence belongs to the actin-binding proteins ADF family. Twinfilin subfamily. In terms of assembly, interacts with G-actin; ADP-actin form and capping protein (CP). May also be able to interact with TWF2 and phosphoinositides, PI(4,5)P2. When bound to PI(4,5)P2, it is down-regulated. Interacts with ACTG1. Phosphorylated on serine and threonine residues. In terms of tissue distribution, widely expressed with highest levels in brain, liver and kidney. Also expressed in heart, lung and testis. Not detected in spleen or skeletal muscle.

The protein resides in the cytoplasm. Its subcellular location is the cytoskeleton. Its function is as follows. Actin-binding protein involved in motile and morphological processes. Inhibits actin polymerization, likely by sequestering G-actin. By capping the barbed ends of filaments, it also regulates motility. Seems to play an important role in clathrin-mediated endocytosis and distribution of endocytic organelles. This is Twinfilin-1 (Twf1) from Mus musculus (Mouse).